The chain runs to 504 residues: ATP synthase subunit alpha (504 aa).

Residue 169 to 176 (GDRQTGKT) participates in ATP binding.

Belongs to the ATPase alpha/beta chains family. As to quaternary structure, F-type ATPases have 2 components, CF(1) - the catalytic core - and CF(0) - the membrane proton channel. CF(1) has five subunits: alpha(3), beta(3), gamma(1), delta(1), epsilon(1). CF(0) has three main subunits: a(1), b(2) and c(9-12). The alpha and beta chains form an alternating ring which encloses part of the gamma chain. CF(1) is attached to CF(0) by a central stalk formed by the gamma and epsilon chains, while a peripheral stalk is formed by the delta and b chains.

The protein resides in the cell membrane. The enzyme catalyses ATP + H2O + 4 H(+)(in) = ADP + phosphate + 5 H(+)(out). Functionally, produces ATP from ADP in the presence of a proton gradient across the membrane. The alpha chain is a regulatory subunit. The sequence is that of ATP synthase subunit alpha from Clostridium botulinum (strain Loch Maree / Type A3).